The primary structure comprises 280 residues: Shikimate dehydrogenase (NADP(+)) (280 aa).

Shikimate-binding positions include 15–17 (SMS) and Thr62. Catalysis depends on Lys66, which acts as the Proton acceptor. Glu78 contacts NADP(+). 2 residues coordinate shikimate: Asn87 and Asp102. NADP(+) is bound by residues 127-131 (GAGGA), 151-156 (NRTLEK), and Ile219. Tyr221 provides a ligand contact to shikimate. Gly242 contacts NADP(+).

This sequence belongs to the shikimate dehydrogenase family. In terms of assembly, homodimer.

It carries out the reaction shikimate + NADP(+) = 3-dehydroshikimate + NADPH + H(+). Its pathway is metabolic intermediate biosynthesis; chorismate biosynthesis; chorismate from D-erythrose 4-phosphate and phosphoenolpyruvate: step 4/7. Involved in the biosynthesis of the chorismate, which leads to the biosynthesis of aromatic amino acids. Catalyzes the reversible NADPH linked reduction of 3-dehydroshikimate (DHSA) to yield shikimate (SA). In Bacillus subtilis (strain 168), this protein is Shikimate dehydrogenase (NADP(+)).